We begin with the raw amino-acid sequence, 483 residues long: ATP synthase subunit beta (483 aa).

162 to 169 contacts ATP; the sequence is GGAGVGKT.

Belongs to the ATPase alpha/beta chains family. F-type ATPases have 2 components, CF(1) - the catalytic core - and CF(0) - the membrane proton channel. CF(1) has five subunits: alpha(3), beta(3), gamma(1), delta(1), epsilon(1). CF(0) has four main subunits: a(1), b(1), b'(1) and c(9-12).

It is found in the cellular thylakoid membrane. The catalysed reaction is ATP + H2O + 4 H(+)(in) = ADP + phosphate + 5 H(+)(out). Its function is as follows. Produces ATP from ADP in the presence of a proton gradient across the membrane. The catalytic sites are hosted primarily by the beta subunits. This Rippkaea orientalis (strain PCC 8801 / RF-1) (Cyanothece sp. (strain PCC 8801)) protein is ATP synthase subunit beta.